We begin with the raw amino-acid sequence, 332 residues long: Ferredoxin--NADP reductase (332 aa).

FAD is bound by residues Asp-33, Gln-41, Tyr-46, Ala-86, Met-121, Asp-282, and Ser-325.

Belongs to the ferredoxin--NADP reductase type 2 family. Homodimer. It depends on FAD as a cofactor.

The enzyme catalyses 2 reduced [2Fe-2S]-[ferredoxin] + NADP(+) + H(+) = 2 oxidized [2Fe-2S]-[ferredoxin] + NADPH. The chain is Ferredoxin--NADP reductase from Sulfurisphaera tokodaii (strain DSM 16993 / JCM 10545 / NBRC 100140 / 7) (Sulfolobus tokodaii).